Reading from the N-terminus, the 228-residue chain is E3 ubiquitin-protein ligase RNF114 (228 aa).

Residues 29–68 (CPVCLEVYEKPVQVPCGHVFCSACLQECLKPKKPVCGVCR) form an RING-type zinc finger. Zn(2+)-binding residues include Cys-91 and Cys-94. Residues 91–110 (CHGCRKNFFLSKIRSHVATC) form a C2HC RNF-type zinc finger. Lys-102 carries the N6-acetyllysine modification. Residues His-106 and Cys-110 each contribute to the Zn(2+) site. The residue at position 112 (Lys-112) is an N6-acetyllysine.

In terms of assembly, interacts with XAF1, the interaction increases XAF1 stability and proapoptotic effects, and may regulate IFN signaling. In terms of processing, autoubiquitinated. Polyubiquitinated in the presence of E2 enzymes UBE2D1, UBE2D2 and UBE2D3, but only monoubiquitinated in the presence of UBE2E1. As to expression, expressed in numerous tissues, including skin, CD4 lymphocytes and dendritic cells. Highest levels in testis.

The protein resides in the cytoplasm. The protein localises to the nucleus. It catalyses the reaction S-ubiquitinyl-[E2 ubiquitin-conjugating enzyme]-L-cysteine + [acceptor protein]-L-lysine = [E2 ubiquitin-conjugating enzyme]-L-cysteine + N(6)-ubiquitinyl-[acceptor protein]-L-lysine.. Its pathway is protein modification; protein ubiquitination. Its function is as follows. E3 ubiquitin-protein ligase that promotes the ubiquitination of various substrates. In turn, participates in the regulation of many biological processes including cell cycle, apoptosis, osteoclastogenesis as well as innate or adaptive immunity. Acts as a negative regulator of NF-kappa-B-dependent transcription by promoting the ubiquitination and stabilization of the NF-kappa-B inhibitor TNFAIP3. May promote the ubiquitination of TRAF6 as well. Also acts as a negative regulator of T-cell activation. Inhibits cellular dsRNA responses and interferon production by targeting MAVS component for proteasomal degradation. Ubiquitinates the CDK inhibitor CDKN1A leading to its degradationand probably also CDKN1B and CDKN1C. This activity stimulates cell cycle G1-to-S phase transition and suppresses cellular senescence. May play a role in spermatogenesis. This chain is E3 ubiquitin-protein ligase RNF114 (RNF114), found in Homo sapiens (Human).